The sequence spans 1595 residues: Collagen-like protein 2 (1595 aa).

N-linked (GlcNAc...) asparagine; by host glycosylation is found at Asn-87 and Asn-134. 4 Collagen-like domains span residues 97-155 (LRGE…NGDV), 175-233 (QVGL…KGEG), 236-295 (GSKG…KGDI), and 299-358 (GIKG…KGMK). The segment covering 181–190 (SQGDQGYKGD) has biased composition (low complexity). 2 disordered regions span residues 181–577 (SQGD…SPDL) and 604–1326 (TDIK…GIKG). 14 stretches are compositionally biased toward basic and acidic residues: residues 191 to 200 (QGSKGDKGQK), 209 to 448 (KGDK…KGTK), 456 to 466 (YKGDIGDKGIK), 474 to 501 (DKGD…DKGY), 510 to 561 (DNGE…DKGE), 606 to 615 (IKGEKGDKGE), 622 to 702 (KGDK…DKGD), 718 to 825 (KGDK…DKGI), 832 to 883 (KGDK…KGFK), 895 to 1041 (KGDK…DKGI), 1048 to 1098 (KGNK…DQGT), 1107 to 1151 (KGDK…KGIK), 1159 to 1250 (NKGD…KGDQ), and 1265 to 1300 (KGDK…DQGI). N-linked (GlcNAc...) asparagine; by host glycans are attached at residues Asn-274, Asn-280, and Asn-286. Residues Asn-373, Asn-382, Asn-400, and Asn-409 are each glycosylated (N-linked (GlcNAc...) asparagine; by host). 5 consecutive Collagen-like domains span residues 380–559 (GDNG…KGDK), 608–907 (GEKG…KGEN), 920–1039 (GDKG…KGDK), 1043–1102 (GTNG…KGET), and 1128–1307 (GDQG…SGAS). N-linked (GlcNAc...) asparagine; by host glycosylation is found at Asn-1345, Asn-1420, and Asn-1545. The tract at residues 1538-1585 (SAFDKGGNGSIRFNPPSSGTKGSGGGGSVQGGGGTIPNDGYPGGNGGP) is disordered. Residues 1558-1585 (KGSGGGGSVQGGGGTIPNDGYPGGNGGP) show a composition bias toward gly residues.

In terms of processing, may be hydroxylated on lysine by the viral-encoded procollagen-lysine,2-oxoglutarate 5-dioxygenase.

Its subcellular location is the virion. In terms of biological role, may participate in the formation of a layer of cross-linked glycosylated fibrils at the viral surface thus giving it a hairy-like appearance. The polypeptide is Collagen-like protein 2 (Acanthamoeba polyphaga (Amoeba)).